We begin with the raw amino-acid sequence, 846 residues long: Putative transcriptional regulator tpeD (846 aa).

Residues 104 to 166 (KHQSECWQHF…NCRKSVPVSK (63 aa)) form a BED-type; degenerate zinc finger. A disordered region spans residues 734–846 (RAREERDAQQ…RDEDFVYETP (113 aa)). The segment covering 756–769 (PISDSEEAESEDES) has biased composition (acidic residues). Positions 773–786 (PQSPQASQARSQRS) are enriched in low complexity. The segment covering 797 to 809 (PLIELDGNEEDEV) has biased composition (acidic residues).

The protein localises to the nucleus. Functionally, putative transcriptional regulator; part of the gene cluster that mediates the biosynthesis of polyesters containing 2,4-dihydroxy-6-(2-hydroxypropyl)benzoate and 3-hydroxybutyrate moieties, such as talapolyester G, 15G256beta and 15G256beta-2; as well as to oxidized derivatives such as 15G256alpha. This chain is Putative transcriptional regulator tpeD, found in Talaromyces stipitatus (strain ATCC 10500 / CBS 375.48 / QM 6759 / NRRL 1006) (Penicillium stipitatum).